Here is a 347-residue protein sequence, read N- to C-terminus: Molybdenum cofactor biosynthesis bifunctional protein (347 aa).

The tract at residues 1–158 (MFTHLDENQQ…EKTGGKADVS (158 aa)) is molybdenum cofactor biosynthesis protein C. Substrate is bound by residues 75-77 (FCH) and 116-117 (ME). Catalysis depends on Asp-131, which acts as the For MoaC activity. A molybdenum cofactor guanylyltransferase region spans residues 159 to 347 (QTPLYGLVLT…NSPEDYGQIN (189 aa)). GTP is bound by residues 167–169 (LTG), Lys-179, Asp-226, and Asp-255. Asp-255 provides a ligand contact to Mg(2+).

It in the N-terminal section; belongs to the MoaC family. This sequence in the C-terminal section; belongs to the MobA family. Mg(2+) is required as a cofactor.

Its subcellular location is the cytoplasm. It carries out the reaction Mo-molybdopterin + GTP + H(+) = Mo-molybdopterin guanine dinucleotide + diphosphate. The enzyme catalyses (8S)-3',8-cyclo-7,8-dihydroguanosine 5'-triphosphate = cyclic pyranopterin phosphate + diphosphate. The protein operates within cofactor biosynthesis; molybdopterin biosynthesis. Catalyzes the conversion of (8S)-3',8-cyclo-7,8-dihydroguanosine 5'-triphosphate to cyclic pyranopterin monophosphate (cPMP). Functionally, transfers a GMP moiety from GTP to Mo-molybdopterin (Mo-MPT) cofactor (Moco or molybdenum cofactor) to form Mo-molybdopterin guanine dinucleotide (Mo-MGD) cofactor. This chain is Molybdenum cofactor biosynthesis bifunctional protein (moaC/mobA), found in Synechocystis sp. (strain ATCC 27184 / PCC 6803 / Kazusa).